Reading from the N-terminus, the 205-residue chain is Holliday junction branch migration complex subunit RuvA (205 aa).

The segment at 1–64 is domain I; sequence MIGKLKGTID…EDQLKLFGFL (64 aa). A domain II region spans residues 65–143; sequence SALEREWFRL…AFVGEMAPSI (79 aa). Residues 144–153 are flexible linker; that stretch reads GLKQELGEGV. Residues 153–205 are domain III; sequence VAAAPVSDAVSALTNLGYSRDQAANAVAAALKNGGEGADSARLIRLGLKELSR.

The protein belongs to the RuvA family. In terms of assembly, homotetramer. Forms an RuvA(8)-RuvB(12)-Holliday junction (HJ) complex. HJ DNA is sandwiched between 2 RuvA tetramers; dsDNA enters through RuvA and exits via RuvB. An RuvB hexamer assembles on each DNA strand where it exits the tetramer. Each RuvB hexamer is contacted by two RuvA subunits (via domain III) on 2 adjacent RuvB subunits; this complex drives branch migration. In the full resolvosome a probable DNA-RuvA(4)-RuvB(12)-RuvC(2) complex forms which resolves the HJ.

It localises to the cytoplasm. In terms of biological role, the RuvA-RuvB-RuvC complex processes Holliday junction (HJ) DNA during genetic recombination and DNA repair, while the RuvA-RuvB complex plays an important role in the rescue of blocked DNA replication forks via replication fork reversal (RFR). RuvA specifically binds to HJ cruciform DNA, conferring on it an open structure. The RuvB hexamer acts as an ATP-dependent pump, pulling dsDNA into and through the RuvAB complex. HJ branch migration allows RuvC to scan DNA until it finds its consensus sequence, where it cleaves and resolves the cruciform DNA. In Sinorhizobium medicae (strain WSM419) (Ensifer medicae), this protein is Holliday junction branch migration complex subunit RuvA.